A 209-amino-acid chain; its full sequence is Ubiquitin-conjugating enzyme E2 S (209 aa).

In terms of domain architecture, UBC core spans 14 to 160 (QTIRQVMREL…ARMMTEIHAQ (147 aa)). Catalysis depends on Cys98, which acts as the Glycyl thioester intermediate. Positions 164-209 (CGVGASGDAKDDDGPSTKKHAGLDKKLQDKKKEKLLKEKKRMLKRL) are disordered. Over residues 171–199 (DAKDDDGPSTKKHAGLDKKLQDKKKEKLL) the composition is skewed to basic and acidic residues. Residues 200–209 (KEKKRMLKRL) are compositionally biased toward basic residues.

The protein belongs to the ubiquitin-conjugating enzyme family.

It catalyses the reaction S-ubiquitinyl-[E1 ubiquitin-activating enzyme]-L-cysteine + [E2 ubiquitin-conjugating enzyme]-L-cysteine = [E1 ubiquitin-activating enzyme]-L-cysteine + S-ubiquitinyl-[E2 ubiquitin-conjugating enzyme]-L-cysteine.. It participates in protein modification; protein ubiquitination. Its function is as follows. Catalyzes the covalent attachment of ubiquitin to other proteins. Acts as an essential factor of the anaphase promoting complex/cyclosome (APC/C), a cell cycle-regulated ubiquitin ligase that controls progression through mitosis. Acts by specifically elongating polyubiquitin chains initiated by the E2 enzyme vih/UbcH10 on APC/C substrates, enhancing the degradation of APC/C substrates by the proteasome and promoting mitotic exit. The polypeptide is Ubiquitin-conjugating enzyme E2 S (Drosophila yakuba (Fruit fly)).